The following is a 399-amino-acid chain: DNA primase DnaG (399 aa).

The Toprim domain occupies 182–268; the sequence is DAIIVVEGRA…EVEDLTQKEI (87 aa). Residues Glu188, Asp230, and Asp232 each contribute to the Mg(2+) site.

It belongs to the archaeal DnaG primase family. Forms a ternary complex with MCM helicase and DNA. Component of the archaeal exosome complex. Requires Mg(2+) as cofactor.

The enzyme catalyses ssDNA + n NTP = ssDNA/pppN(pN)n-1 hybrid + (n-1) diphosphate.. Its function is as follows. RNA polymerase that catalyzes the synthesis of short RNA molecules used as primers for DNA polymerase during DNA replication. Also part of the exosome, which is a complex involved in RNA degradation. Acts as a poly(A)-binding protein that enhances the interaction between heteromeric, adenine-rich transcripts and the exosome. This chain is DNA primase DnaG, found in Archaeoglobus fulgidus (strain ATCC 49558 / DSM 4304 / JCM 9628 / NBRC 100126 / VC-16).